A 632-amino-acid polypeptide reads, in one-letter code: tRNA uridine 5-carboxymethylaminomethyl modification enzyme MnmG (632 aa).

FAD contacts are provided by residues Gly-16–Gly-21, Val-128, and Ser-183. Positions Pro-206–Lys-225 are disordered. Positions Ser-216–Lys-225 are enriched in basic and acidic residues. Gly-277–Phe-291 contacts NAD(+). Gln-374 serves as a coordination point for FAD.

The protein belongs to the MnmG family. In terms of assembly, homodimer. Heterotetramer of two MnmE and two MnmG subunits. FAD is required as a cofactor.

It localises to the cytoplasm. Functionally, NAD-binding protein involved in the addition of a carboxymethylaminomethyl (cmnm) group at the wobble position (U34) of certain tRNAs, forming tRNA-cmnm(5)s(2)U34. The chain is tRNA uridine 5-carboxymethylaminomethyl modification enzyme MnmG from Lactobacillus acidophilus (strain ATCC 700396 / NCK56 / N2 / NCFM).